The sequence spans 86 residues: Large ribosomal subunit protein bL28 (86 aa).

Belongs to the bacterial ribosomal protein bL28 family.

This is Large ribosomal subunit protein bL28 from Phocaeicola vulgatus (strain ATCC 8482 / DSM 1447 / JCM 5826 / CCUG 4940 / NBRC 14291 / NCTC 11154) (Bacteroides vulgatus).